A 396-amino-acid polypeptide reads, in one-letter code: Argininosuccinate synthase (396 aa).

9–17 is a binding site for ATP; that stretch reads AYSGGLDTS. Residue tyrosine 85 coordinates L-citrulline. Glycine 115 lines the ATP pocket. L-aspartate is bound by residues threonine 117, asparagine 121, and aspartate 122. Asparagine 121 provides a ligand contact to L-citrulline. Arginine 125, serine 173, glutamate 258, and tyrosine 270 together coordinate L-citrulline.

It belongs to the argininosuccinate synthase family. Type 1 subfamily. In terms of assembly, homotetramer.

The protein localises to the cytoplasm. It catalyses the reaction L-citrulline + L-aspartate + ATP = 2-(N(omega)-L-arginino)succinate + AMP + diphosphate + H(+). Its pathway is amino-acid biosynthesis; L-arginine biosynthesis; L-arginine from L-ornithine and carbamoyl phosphate: step 2/3. The polypeptide is Argininosuccinate synthase (Streptococcus mutans serotype c (strain ATCC 700610 / UA159)).